We begin with the raw amino-acid sequence, 506 residues long: MTETTAHPVTTATGTDVRVRFCPSPTGTPHVGLIRTALFNWAYARHTGGKLVFRVEDTDAARDSEESYEQLIEALRWLEIDWDEGEGVGGPHAPYRQSQRTDLYLDVIAKLTASGHLYESFATAEEIEARNRAAGRDPKMGYDNFERDLTEEERQAFRDEGRSPALRLRVPDTDLSFDDLVRGTVTFPAGSFPDFVLVRPNGAPLYTLVNPVDDALMGITHVLRGEDLLSSTPRQIALYHALIDIGVADAIPRFGHLPYVMGEGNKKLSKRDPESNLFHHRDRGFIPEGLINYLALLGWSLTHDRDVFSRMEMVTAFDVADVNPNPARFDLKKAESLNGDHIRLLALDDFAQRLVPYLQAADVVGAELTHDQRRMLEAAAPLVQERMQLLGEAPDLLSFLFTTADELPYDDAAVQALKDDAPEVLAASRGALSGVPHTQWDIDLVQEVLQNTLITGMGMKPRLAYGPLRVGISGRRISPPLFESMVLLGKDETIARLDRLAGMLGE.

Residues 23–33 (PSPTGTPHVGL) carry the 'HIGH' region motif. A 'KMSKS' region motif is present at residues 267-271 (KLSKR). Lys-270 contacts ATP.

Belongs to the class-I aminoacyl-tRNA synthetase family. Glutamate--tRNA ligase type 1 subfamily. In terms of assembly, monomer.

It is found in the cytoplasm. It catalyses the reaction tRNA(Glu) + L-glutamate + ATP = L-glutamyl-tRNA(Glu) + AMP + diphosphate. Functionally, catalyzes the attachment of glutamate to tRNA(Glu) in a two-step reaction: glutamate is first activated by ATP to form Glu-AMP and then transferred to the acceptor end of tRNA(Glu). The sequence is that of Glutamate--tRNA ligase from Clavibacter sepedonicus (Clavibacter michiganensis subsp. sepedonicus).